The sequence spans 1379 residues: DNA-directed RNA polymerase subunit beta (1379 aa).

The protein belongs to the RNA polymerase beta chain family. As to quaternary structure, in plastids the minimal PEP RNA polymerase catalytic core is composed of four subunits: alpha, beta, beta', and beta''. When a (nuclear-encoded) sigma factor is associated with the core the holoenzyme is formed, which can initiate transcription.

It localises to the plastid. The protein localises to the chloroplast. It carries out the reaction RNA(n) + a ribonucleoside 5'-triphosphate = RNA(n+1) + diphosphate. DNA-dependent RNA polymerase catalyzes the transcription of DNA into RNA using the four ribonucleoside triphosphates as substrates. This Trieres chinensis (Marine centric diatom) protein is DNA-directed RNA polymerase subunit beta.